Consider the following 137-residue polypeptide: Large ribosomal subunit protein uL16 (137 aa).

It belongs to the universal ribosomal protein uL16 family. As to quaternary structure, part of the 50S ribosomal subunit.

Its function is as follows. Binds 23S rRNA and is also seen to make contacts with the A and possibly P site tRNAs. This is Large ribosomal subunit protein uL16 from Aromatoleum aromaticum (strain DSM 19018 / LMG 30748 / EbN1) (Azoarcus sp. (strain EbN1)).